A 419-amino-acid chain; its full sequence is Tyrosine--tRNA ligase (419 aa).

Tyr-42 provides a ligand contact to L-tyrosine. The 'HIGH' region motif lies at 47–56 (ATAPSLHVGS). L-tyrosine is bound by residues Tyr-179 and Gln-183. A 'KMSKS' region motif is present at residues 239–243 (KMGKT). Lys-242 is an ATP binding site. Positions 353–418 (VVLAALFADA…GKKKIVLVKP (66 aa)) constitute an S4 RNA-binding domain.

It belongs to the class-I aminoacyl-tRNA synthetase family. TyrS type 1 subfamily. Homodimer.

The protein localises to the cytoplasm. The catalysed reaction is tRNA(Tyr) + L-tyrosine + ATP = L-tyrosyl-tRNA(Tyr) + AMP + diphosphate + H(+). Its function is as follows. Catalyzes the attachment of tyrosine to tRNA(Tyr) in a two-step reaction: tyrosine is first activated by ATP to form Tyr-AMP and then transferred to the acceptor end of tRNA(Tyr). This chain is Tyrosine--tRNA ligase, found in Caulobacter vibrioides (strain ATCC 19089 / CIP 103742 / CB 15) (Caulobacter crescentus).